Here is a 250-residue protein sequence, read N- to C-terminus: uncharacterized protein (250 aa).

It to Synechocystis PCC 6803 sll0249.

This is an uncharacterized protein from Nostoc sp. (strain PCC 7120 / SAG 25.82 / UTEX 2576).